A 208-amino-acid chain; its full sequence is Calcyphosin-like protein (208 aa).

4 EF-hand domains span residues 39–74, 75–110, 111–146, and 154–191; these read AGIK…YAVV, MEKE…PMSR, ARKE…KHHP, and TEEQ…VSAS. Residues Asp-52, Asn-54, Asn-56, Thr-58, Glu-63, Asp-88, Asp-90, Ser-92, Thr-94, and Glu-99 each contribute to the Ca(2+) site.

The protein resides in the cytoplasm. This Mus musculus (Mouse) protein is Calcyphosin-like protein (Capsl).